Here is a 269-residue protein sequence, read N- to C-terminus: MPELPEVETTLRGIRPHLQGRILKSVTVREPRLRWPVSEAIYALRDCPVVALRRRAKYLLIELEHGQLLIHLGMSGTLRVVDMDLPLRKHDHVDLLLDSGKVLRFNDPRRFGSVLFQGGDQPHSLLQSLGPEPLSDSFNGQWLFARSRGRKVAVKSFIMDNATVVGVGNIYAQESLFMAGIHPSRAAGRISLARYQALAEAIKRVLAQAIEAGGTTLKDFTRADGQPGYFAQSLNVYGRAGQPCVQCDAILKADRHGQRSTAYCPQCQR.

The active-site Schiff-base intermediate with DNA is the P2. Residue E3 is the Proton donor of the active site. Catalysis depends on K57, which acts as the Proton donor; for beta-elimination activity. Residues H90, R109, and R150 each coordinate DNA. The segment at 235–269 (NVYGRAGQPCVQCDAILKADRHGQRSTAYCPQCQR) adopts an FPG-type zinc-finger fold. The active-site Proton donor; for delta-elimination activity is the R259.

This sequence belongs to the FPG family. Monomer. Zn(2+) is required as a cofactor.

It catalyses the reaction Hydrolysis of DNA containing ring-opened 7-methylguanine residues, releasing 2,6-diamino-4-hydroxy-5-(N-methyl)formamidopyrimidine.. The enzyme catalyses 2'-deoxyribonucleotide-(2'-deoxyribose 5'-phosphate)-2'-deoxyribonucleotide-DNA = a 3'-end 2'-deoxyribonucleotide-(2,3-dehydro-2,3-deoxyribose 5'-phosphate)-DNA + a 5'-end 5'-phospho-2'-deoxyribonucleoside-DNA + H(+). Functionally, involved in base excision repair of DNA damaged by oxidation or by mutagenic agents. Acts as a DNA glycosylase that recognizes and removes damaged bases. Has a preference for oxidized purines, such as 7,8-dihydro-8-oxoguanine (8-oxoG). Has AP (apurinic/apyrimidinic) lyase activity and introduces nicks in the DNA strand. Cleaves the DNA backbone by beta-delta elimination to generate a single-strand break at the site of the removed base with both 3'- and 5'-phosphates. This is Formamidopyrimidine-DNA glycosylase from Alcanivorax borkumensis (strain ATCC 700651 / DSM 11573 / NCIMB 13689 / SK2).